We begin with the raw amino-acid sequence, 331 residues long: Threonine-phosphate decarboxylase (331 aa).

An N6-(pyridoxal phosphate)lysine modification is found at K192.

This sequence belongs to the class-I pyridoxal-phosphate-dependent aminotransferase family. Homodimer. Pyridoxal 5'-phosphate serves as cofactor.

It localises to the cytoplasm. The catalysed reaction is O-phospho-L-threonine + H(+) = (R)-1-aminopropan-2-yl phosphate + CO2. It functions in the pathway cofactor biosynthesis; adenosylcobalamin biosynthesis. Its function is as follows. Decarboxylates L-threonine-O-3-phosphate to yield (R)-1-amino-2-propanol O-2-phosphate, the precursor for the linkage between the nucleotide loop and the corrin ring in cobalamin. This is Threonine-phosphate decarboxylase (cobC) from Pseudomonas aeruginosa (strain ATCC 15692 / DSM 22644 / CIP 104116 / JCM 14847 / LMG 12228 / 1C / PRS 101 / PAO1).